The following is a 555-amino-acid chain: Luciferin 2-monooxygenase (555 aa).

A signal peptide spans M1–A11. VWFD domains are found at residues I80 to K266 and G319 to N494. 4 cysteine pairs are disulfide-bonded: C82/C222, C321/C454, C343/C493, and C352/C451. N-linked (GlcNAc...) asparagine glycosylation is found at N186 and N408.

The cysteine residues presumably exist in intramolecular disulfide bridges. In terms of processing, the N-terminus is blocked.

It catalyses the reaction Cypridina luciferin + O2 = oxidized Cypridina luciferin + hnu + CO2. The sequence is that of Luciferin 2-monooxygenase from Vargula hilgendorfii (Sea firefly).